The chain runs to 96 residues: uncharacterized protein (96 aa).

This is an uncharacterized protein from Escherichia coli (strain K12).